A 681-amino-acid polypeptide reads, in one-letter code: Mitosis inhibitor nif1 (681 aa).

Positions 22–43 (LNKKDGNDDDKAEHSKRSGYHG) are disordered. Basic and acidic residues predominate over residues 23–37 (NKKDGNDDDKAEHSK). Position 70 is a phosphoserine (Ser70). 2 disordered regions span residues 80–104 (TTSG…SSPF) and 182–324 (YYHE…SSRQ). Residues 92–103 (ESPASPAEASSP) are compositionally biased toward low complexity. Residues 191 to 203 (TASNTSPTPNSIK) are compositionally biased toward polar residues. The residue at position 196 (Ser196) is a Phosphoserine. Positions 238-278 (SSGDSTPLSGSSSSKGMLMSMSTSENHSLSSNPELSNSNLL) are enriched in low complexity. Over residues 296 to 306 (SSKEPDKEHST) the composition is skewed to basic and acidic residues. Sel1-like repeat units lie at residues 547 to 582 (ALIL…AWGD) and 583 to 618 (ADAQ…FQGI).

Its subcellular location is the cytoplasm. In terms of biological role, functions as a negative regulator of mitosis. It interacts with the C-terminal of nim1, thereby inhibiting its kinase activity which phosphorylates wee1. This is Mitosis inhibitor nif1 (nif1) from Schizosaccharomyces pombe (strain 972 / ATCC 24843) (Fission yeast).